Reading from the N-terminus, the 342-residue chain is tRNA-specific 2-thiouridylase MnmA (342 aa).

Residues 6-13 (GMSGGVDS) and L32 contribute to the ATP site. C99 (nucleophile) is an active-site residue. Residues C99 and C190 are joined by a disulfide bond. ATP is bound at residue G124. An interaction with tRNA region spans residues 140-142 (KDQ). The active-site Cysteine persulfide intermediate is the C190. The interval 292–293 (RY) is interaction with tRNA.

Belongs to the MnmA/TRMU family.

The protein localises to the cytoplasm. The enzyme catalyses S-sulfanyl-L-cysteinyl-[protein] + uridine(34) in tRNA + AH2 + ATP = 2-thiouridine(34) in tRNA + L-cysteinyl-[protein] + A + AMP + diphosphate + H(+). Functionally, catalyzes the 2-thiolation of uridine at the wobble position (U34) of tRNA, leading to the formation of s(2)U34. The sequence is that of tRNA-specific 2-thiouridylase MnmA from Hydrogenobaculum sp. (strain Y04AAS1).